A 224-amino-acid polypeptide reads, in one-letter code: Deoxyribose-phosphate aldolase (224 aa).

Residue Asp-92 is the Proton donor/acceptor of the active site. The active-site Schiff-base intermediate with acetaldehyde is the Lys-155. Residue Lys-184 is the Proton donor/acceptor of the active site.

The protein belongs to the DeoC/FbaB aldolase family. DeoC type 1 subfamily.

The protein localises to the cytoplasm. It carries out the reaction 2-deoxy-D-ribose 5-phosphate = D-glyceraldehyde 3-phosphate + acetaldehyde. Its pathway is carbohydrate degradation; 2-deoxy-D-ribose 1-phosphate degradation; D-glyceraldehyde 3-phosphate and acetaldehyde from 2-deoxy-alpha-D-ribose 1-phosphate: step 2/2. Its function is as follows. Catalyzes a reversible aldol reaction between acetaldehyde and D-glyceraldehyde 3-phosphate to generate 2-deoxy-D-ribose 5-phosphate. The chain is Deoxyribose-phosphate aldolase from Halalkalibacterium halodurans (strain ATCC BAA-125 / DSM 18197 / FERM 7344 / JCM 9153 / C-125) (Bacillus halodurans).